A 491-amino-acid chain; its full sequence is Protein nucleotidyltransferase YdiU (491 aa).

ATP contacts are provided by glycine 94, glycine 96, arginine 97, lysine 117, aspartate 129, glycine 130, arginine 180, and arginine 187. The Proton acceptor role is filled by aspartate 256. Mg(2+) contacts are provided by asparagine 257 and aspartate 266. Aspartate 266 is a binding site for ATP.

This sequence belongs to the SELO family. The cofactor is Mg(2+). Mn(2+) is required as a cofactor.

The catalysed reaction is L-seryl-[protein] + ATP = 3-O-(5'-adenylyl)-L-seryl-[protein] + diphosphate. It catalyses the reaction L-threonyl-[protein] + ATP = 3-O-(5'-adenylyl)-L-threonyl-[protein] + diphosphate. The enzyme catalyses L-tyrosyl-[protein] + ATP = O-(5'-adenylyl)-L-tyrosyl-[protein] + diphosphate. It carries out the reaction L-histidyl-[protein] + UTP = N(tele)-(5'-uridylyl)-L-histidyl-[protein] + diphosphate. The catalysed reaction is L-seryl-[protein] + UTP = O-(5'-uridylyl)-L-seryl-[protein] + diphosphate. It catalyses the reaction L-tyrosyl-[protein] + UTP = O-(5'-uridylyl)-L-tyrosyl-[protein] + diphosphate. Functionally, nucleotidyltransferase involved in the post-translational modification of proteins. It can catalyze the addition of adenosine monophosphate (AMP) or uridine monophosphate (UMP) to a protein, resulting in modifications known as AMPylation and UMPylation. In Clostridium botulinum (strain Loch Maree / Type A3), this protein is Protein nucleotidyltransferase YdiU.